The primary structure comprises 118 residues: MNNYETVFILTPVLSDAQMKEAVEKFTNLLKAQGAEIVNEENWGLRKLAYPIDKKTTGFYQLVEFKADPSVIATLELNFRRDERVIRFLTFRQDKYAAEYAAKRRNLKSSKETVKENN.

Belongs to the bacterial ribosomal protein bS6 family.

Functionally, binds together with bS18 to 16S ribosomal RNA. In Parabacteroides distasonis (strain ATCC 8503 / DSM 20701 / CIP 104284 / JCM 5825 / NCTC 11152), this protein is Small ribosomal subunit protein bS6.